Here is a 339-residue protein sequence, read N- to C-terminus: Isopentenyl-diphosphate delta-isomerase (339 aa).

Residue 7-8 participates in substrate binding; sequence RK. Residues Ser65, 66–68, Ser96, and Asn125 each bind FMN; that span reads SMT. 96–98 provides a ligand contact to substrate; that stretch reads SQR. Gln160 serves as a coordination point for substrate. Glu161 serves as a coordination point for Mg(2+). Residues Lys192, Thr222, and 293–294 contribute to the FMN site; that span reads AG.

It belongs to the IPP isomerase type 2 family. As to quaternary structure, homooctamer. Dimer of tetramers. Requires FMN as cofactor. It depends on NADPH as a cofactor. Mg(2+) is required as a cofactor.

It localises to the cytoplasm. It catalyses the reaction isopentenyl diphosphate = dimethylallyl diphosphate. Involved in the biosynthesis of isoprenoids. Catalyzes the 1,3-allylic rearrangement of the homoallylic substrate isopentenyl (IPP) to its allylic isomer, dimethylallyl diphosphate (DMAPP). In Vibrio campbellii (strain ATCC BAA-1116), this protein is Isopentenyl-diphosphate delta-isomerase.